The following is a 345-amino-acid chain: Anthranilate phosphoribosyltransferase (345 aa).

5-phospho-alpha-D-ribose 1-diphosphate contacts are provided by residues Gly86, 89 to 90, Thr94, 96 to 99, 114 to 122, and Ala126; these read GD, NIST, and KHGNRNLSS. Gly86 lines the anthranilate pocket. Mg(2+) is bound at residue Ser98. Asn117 contacts anthranilate. Position 172 (Arg172) interacts with anthranilate. Mg(2+) contacts are provided by Asp231 and Glu232.

Belongs to the anthranilate phosphoribosyltransferase family. In terms of assembly, homodimer. Mg(2+) serves as cofactor.

The catalysed reaction is N-(5-phospho-beta-D-ribosyl)anthranilate + diphosphate = 5-phospho-alpha-D-ribose 1-diphosphate + anthranilate. It participates in amino-acid biosynthesis; L-tryptophan biosynthesis; L-tryptophan from chorismate: step 2/5. Functionally, catalyzes the transfer of the phosphoribosyl group of 5-phosphorylribose-1-pyrophosphate (PRPP) to anthranilate to yield N-(5'-phosphoribosyl)-anthranilate (PRA). This Jannaschia sp. (strain CCS1) protein is Anthranilate phosphoribosyltransferase.